The following is a 130-amino-acid chain: Odontogenesis associated phosphoprotein (130 aa).

The first 23 residues, 1–23 (MARRHCFSYWLLVCWLVVTVAEG), serve as a signal peptide directing secretion.

As to expression, highly expressed in placenta.

The protein resides in the secreted. May promote nucleation of hydroxyapatite. The sequence is that of Odontogenesis associated phosphoprotein from Homo sapiens (Human).